We begin with the raw amino-acid sequence, 406 residues long: Peptide chain release factor PrfB3, chloroplastic (406 aa).

Belongs to the prokaryotic/mitochondrial release factor family. In terms of assembly, interacts with PDE338.

The protein resides in the plastid. The protein localises to the chloroplast stroma. It is found in the chloroplast. In terms of biological role, involved in the light- and stress-dependent regulation of stability of 3' processed petB transcripts, thus regulating cytochrome b6 accumulation, a rate-limiting step in photosynthetic electron transport. May be recruited to specifically protect petB transcripts against 3'-5' exonucleolytic attack by masking the 3' ends. Does not function as release factor. The sequence is that of Peptide chain release factor PrfB3, chloroplastic from Arabidopsis thaliana (Mouse-ear cress).